A 33-amino-acid chain; its full sequence is NAD-reducing hydrogenase HoxS subunit gamma (33 aa).

Positions 1–33 constitute a 2Fe-2S ferredoxin-type domain; the sequence is SIEIEIDGVTVTTEESRTLVDVAAEAGVYIPTL.

It belongs to the complex I 75 kDa subunit family. In terms of assembly, tetramer of an alpha and a gamma subunits (flavin-containing dimer), and a delta and a nickel-containing beta subunits (hydrogenase dimer). The cofactor is [4Fe-4S] cluster.

It is found in the cytoplasm. The enzyme catalyses H2 + NAD(+) = NADH + H(+). Subunits alpha and gamma of HoxS constitute an NADH--oxidoreductase. In Rhodococcus opacus (Nocardia opaca), this protein is NAD-reducing hydrogenase HoxS subunit gamma (hoxU).